The sequence spans 456 residues: Putative F-box/FBD/LRR-repeat protein At1g66300 (456 aa).

The tract at residues 1–23 is disordered; it reads MDEDGEKRVRTKRLCSPESSDKK. Positions 28-74 constitute an F-box domain; it reads VDWVRDLPESLICHVLLNLSTKDVIKNCVLSTKWRYLWRYVPGLDLD. 4 LRR repeats span residues 136–163, 185–210, 234–260, and 347–372; these read HLDL…KLCG, VKFA…TLCR, PNTM…TLSH, and FYED…VVGS. Residues 377–429 enclose the FBD domain; the sequence is MERTSIISGHRCLLSSLEYVEIETPLTGEVFEMKLVSYLLENSPILKKLTIHL.

In Arabidopsis thaliana (Mouse-ear cress), this protein is Putative F-box/FBD/LRR-repeat protein At1g66300.